Consider the following 1192-residue polypeptide: MAKYMISGSKGGSKKPYVPKEMEDNLISINKIKVLLAVSDGECDPDFTLRDLYLDDVPVIASDGTVNYEGVTAEYRPGTQTQDYIQGFTDTSSEVTVARDITGDNPYVISVTNKNLSAVRIKILMPVGIKTEDNGDLVGVRVEYAVDMAIDGGSYSEVMRDVIDGKTRSGYDRSRRIDLPKFDERVLIRVKRLTPDSTSSKVTDKIKLQSYAEVVDAKFRYPLTGLVFVEFDSELFPTQIPNISIKKKWKIINVPSNYDPISREYHGSWDGTFKKAWSNNPAWVLYDLVTNQRYGLDQRELGIQIDKWSLYEAGVYCDQKVPDGKGGTEPRYLCDVVIQNQVEAYQLIRDICSIFRGMSFWNGESLSIVIDKPRDPSYVFTNENVINGDFQYTTASEKSMYTQCNVTFDDEQNMYQQDVEGVFDTEAALRFGYNPTSITAIGCTRRSEANRRGRWVLKTNLRSTTVNFATGLEGMIPSIGDVIAIADNFQSSNLTLNLSGRVMEVSGLQVFVPFKVDARPGDFIIINKPDGKPVKRTISKVSADGKTIELNIGFGFDVKPDTVFAIDRTDLALQQYVVTTISKGDDENEFTYSITAVEYDPNKYDEIDYGVNIDDRPTSIVQPDVMAAPENVKISSYSRVVQGVSVETMVVSWDKVPYASLYEMQWRKGDGNWLNTPQTANKEIEVEGIYSGNYQVRVRSVSASGNASPWSKIATATLTGKVGEPGAPINLTASDNEVFGIRVKWGMPEGSGDTAYIELHQSPDGTVENSSLLTLIPYPQYEYWHSTLPAGQVVWYRIRSVDRIGNVSSWTDFVRGMASDDVESVLGDILDKIFDTEAGQEIKENAIDSANKIKDQAQSIIQNALANDADVKWTRVQNGKRKAEYGHALELIANETEARVTQIEELRASIDGEITSSIKTVQEAIATESETRATQIQQLDSKFTKEIDGVRKDTSASISDVRQTITNESEARAQAVQQLDAKFTKEINDLDGVIKTEVEANISEVKQAIANETEARVQADQALTARFGDVESALVEKLDSWASVDSVGAKYAMKLGLTYKGQQYSAGMVMQLSQGSSGLISQILFDANRFAIMTSSTGGTFTLPFVVENNQVFINSLLVKNGSITNAMIGNVIQSNNFVQNQQGWRLDKNGIFENYGSTPGEGATKFTNEGLKVKDANGVLRVEVGRITGSW.

2 consecutive Fibronectin type-III domains span residues 628 to 722 (APEN…TGKV) and 727 to 821 (APIN…ASDD).

Belongs to the Caudoviricetes tip attachment protein J family. As to quaternary structure, homotrimer. In terms of processing, ubiquitinated by the Bil antiviral defense system; about 20% of CTF is ubiqutinated when the Bil system is expressed in E.coli MG1655 and infected with this virus, or when this protein is expressed in a strain with the Bil system.

It is found in the virion. The protein resides in the host cytoplasm. In terms of biological role, attaches the virion to the host receptor, inducing viral DNA ejection. During tail assembly, initiates distal tail tip assembly. During virus entry in host cell, strongly binds to host receptor in an irreversible attachment. The binding induces structural changes in the tail leading to viral DNA injection. The sequence is that of Tip attachment protein J from Escherichia phage SECphi27.